The primary structure comprises 753 residues: Catalase-peroxidase (753 aa).

The segment at residues 90-238 is a cross-link (tryptophyl-tyrosyl-methioninium (Trp-Tyr) (with M-264)); sequence WHSAGTYRVT…LASSHMGLIY (149 aa). The active-site Proton acceptor is H91. The tract at residues 196 to 220 is disordered; it reads SEGQEGHEGHGVVQGDESKKQHTDI. Positions 238 to 264 form a cross-link, tryptophyl-tyrosyl-methioninium (Tyr-Met) (with W-90); sequence YVNPEGPDGIPDPVASAKDIRVTFGRM. Residue H279 coordinates heme b.

This sequence belongs to the peroxidase family. Peroxidase/catalase subfamily. In terms of assembly, homodimer or homotetramer. The cofactor is heme b. Formation of the three residue Trp-Tyr-Met cross-link is important for the catalase, but not the peroxidase activity of the enzyme.

The protein localises to the cytoplasm. It carries out the reaction H2O2 + AH2 = A + 2 H2O. The enzyme catalyses 2 H2O2 = O2 + 2 H2O. With respect to regulation, inhibited by KCN. Bifunctional enzyme with both catalase and broad-spectrum peroxidase activity. In Neurospora crassa (strain ATCC 24698 / 74-OR23-1A / CBS 708.71 / DSM 1257 / FGSC 987), this protein is Catalase-peroxidase.